The sequence spans 1338 residues: Insulin receptor substrate 2 (1338 aa).

Over residues 1–12 (MASPPRHGPPGP) the composition is skewed to pro residues. Disordered regions lie at residues 1–31 (MASP…NHSV) and 49–72 (VLRG…QPPR). Positions 16 to 144 (DGPNLNNNNN…WYRALTDLVS (129 aa)) constitute a PH domain. The span at 19-28 (NLNNNNNNNN) shows a compositional bias: low complexity. Residues 53 to 66 (PGAGGDEATAGGGS) are compositionally biased toward gly residues. One can recognise an IRS-type PTB domain in the interval 194 to 298 (YREVWQVNLK…EAMKALKELF (105 aa)). The interval 303 to 411 (RSKSQSSGSS…SHTLSGGCGG (109 aa)) is disordered. 2 positions are modified to phosphoserine: S306 and S346. T350 is modified (phosphothreonine). Residues S365, S384, S388, and S391 each carry the phosphoserine modification. Residue R412 is modified to Omega-N-methylarginine. A disordered region spans residues 428-537 (SRSMSMPVAH…PPARDGGGGG (110 aa)). Residues 444-453 (SPGSLSSSSG) show a composition bias toward low complexity. Residues 459 to 471 (YPPPPGPHPPLPH) are compositionally biased toward pro residues. Residues 475–493 (HGPGQRPSSGSASASGSPS) show a composition bias toward low complexity. The residue at position 520 (T520) is a Phosphothreonine. S523 is subject to Phosphoserine. At T527 the chain carries Phosphothreonine. At Y540 the chain carries Phosphotyrosine; by INSR. Residues 540 to 543 (YGYM) carry the YXXM motif 1 motif. S560 bears the Phosphoserine; by PLK1 mark. A Phosphoserine modification is found at S577. Phosphothreonine is present on residues T579 and T580. A Phosphoserine modification is found at S594. The YXXM motif 2 motif lies at 598–601 (YTLM). Residues S608 and S620 each carry the phosphoserine modification. Residues Y653 and Y675 each carry the phosphotyrosine; by INSR modification. Short sequence motifs (YXXM motif) lie at residues 653–656 (YMPM) and 675–678 (YMPM). S679 and S682 each carry phosphoserine. The segment covering 703–719 (PSAGPAGPAPTSAAGRT) has biased composition (low complexity). The tract at residues 703–739 (PSAGPAGPAPTSAAGRTFPASGGGYKASSPAESSPED) is disordered. A phosphoserine mark is found at S735 and S736. The YXXM motif 5 signature appears at 742 to 745 (YMRM). Residue S770 is modified to Phosphoserine. T779 carries the phosphothreonine modification. S805 carries the post-translational modification Phosphoserine. Positions 823-826 (YVLM) match the YXXM motif 6 motif. S828 bears the Phosphoserine mark. The segment at 840-1101 (EPQATPGPSQ…KPEAARVASP (262 aa)) is disordered. Residues 859–870 (TQPPHPVVPSPV) are compositionally biased toward pro residues. S915 is subject to Phosphoserine. Y919 is subject to Phosphotyrosine; by INSR. Residues 938–967 (LLASAASSSSLLSASSPASSLGSGTPGTSS) are compositionally biased toward low complexity. Phosphoserine is present on S973. Y978 carries the phosphotyrosine; by INSR modification. Over residues 1013-1022 (PYPPLPPRPS) the composition is skewed to pro residues. The short motif at 1072–1075 (YTEM) is the YXXM motif 7 element. The residue at position 1082 (T1082) is a Phosphothreonine. The span at 1083–1093 (PPQPIAAPPKP) shows a compositional bias: pro residues. S1100 carries the post-translational modification Phosphoserine. The residue at position 1109 (S1109) is a Phosphoserine; by PLK1. The disordered stretch occupies residues 1121 to 1296 (LQASQPPDPH…TRSLGGLISA (176 aa)). The segment covering 1150 to 1165 (ETFSSTTTVTPVSPSF) has biased composition (low complexity). A Phosphothreonine modification is found at T1159. Phosphoserine occurs at positions 1162, 1174, 1176, and 1186. The segment covering 1174 to 1183 (SASVENVSLR) has biased composition (polar residues). The span at 1188–1198 (GGVGVGPGGGD) shows a compositional bias: gly residues. Residue S1203 is modified to Phosphoserine. The segment covering 1224–1236 (QPGGLVGCPGSGG) has biased composition (gly residues). Y1253 carries the phosphotyrosine; by INSR modification. Pro residues predominate over residues 1263–1277 (GLPPQPQPPPPPLPQ). A Glycyl lysine isopeptide (Lys-Gly) (interchain with G-Cter in ubiquitin) cross-link involves residue K1331.

Interacts with PHIP. Interacts with SH2B1; this interaction enhances leptin-induced activation of the PI3-kinase pathway. Interacts with GRB2. Interacts with PIK3R1. Interacts with DVL2; this interaction promotes the Wnt/beta-catenin signaling pathway. Phosphorylation fluctuates in a cell-cycle dependent manner with hyperphosphorylation during mitosis. Phosphorylated at Ser-560 and Ser-1109 by PLK1; these phosphorylations prevent the activation of the PI3K pathway upon growth factor stimulation by inhibiting the binding between IRS2 and the PI3K pathway components and increasing the level of IRS2 protein degradation. In addition, they prevent premature mitotic exit. In terms of processing, monoubiquitinated by NEDD4; leading to enhanced IGF1 signaling. During cell cycle, ubiquitination and proteasomal degradation are controlled by FZR1.

Its subcellular location is the cytoplasm. It localises to the cytosol. Its function is as follows. Signaling adapter protein that participates in the signal transduction from two prominent receptor tyrosine kinases, insulin receptor/INSR and insulin-like growth factor I receptor/IGF1R. Plays therefore an important role in development, growth, glucose homeostasis as well as lipid metabolism. Upon phosphorylation by the insulin receptor, functions as a signaling scaffold that propagates insulin action through binding to SH2 domain-containing proteins including the p85 regulatory subunit of PI3K, NCK1, NCK2, GRB2 or SHP2. Recruitment of GRB2 leads to the activation of the guanine nucleotide exchange factor SOS1 which in turn triggers the Ras/Raf/MEK/MAPK signaling cascade. Activation of the PI3K/AKT pathway is responsible for most of insulin metabolic effects in the cell, and the Ras/Raf/MEK/MAPK is involved in the regulation of gene expression and in cooperation with the PI3K pathway regulates cell growth and differentiation. Acts a positive regulator of the Wnt/beta-catenin signaling pathway through suppression of DVL2 autophagy-mediated degradation leading to cell proliferation. Plays a role in cell cycle progression by promoting a robust spindle assembly checkpoint (SAC) during M-phase. In macrophages, IL4-induced tyrosine phosphorylation of IRS2 leads to the recruitment and activation of phosphoinositide 3-kinase (PI3K). This chain is Insulin receptor substrate 2 (IRS2), found in Homo sapiens (Human).